Reading from the N-terminus, the 502-residue chain is Glycerol kinase (502 aa).

Threonine 14 provides a ligand contact to ADP. ATP is bound by residues threonine 14 and threonine 15. Threonine 14 lines the sn-glycerol 3-phosphate pocket. Position 18 (arginine 18) interacts with ADP. Positions 84, 85, 136, and 245 each coordinate sn-glycerol 3-phosphate. Arginine 84, glutamate 85, tyrosine 136, aspartate 245, and glutamine 246 together coordinate glycerol. ADP is bound by residues threonine 267 and glycine 314. Residues threonine 267, glycine 314, glutamine 318, and glycine 415 each contribute to the ATP site. Residues glycine 415 and asparagine 419 each contribute to the ADP site.

Belongs to the FGGY kinase family.

The catalysed reaction is glycerol + ATP = sn-glycerol 3-phosphate + ADP + H(+). The protein operates within polyol metabolism; glycerol degradation via glycerol kinase pathway; sn-glycerol 3-phosphate from glycerol: step 1/1. Its activity is regulated as follows. Inhibited by fructose 1,6-bisphosphate (FBP). In terms of biological role, key enzyme in the regulation of glycerol uptake and metabolism. Catalyzes the phosphorylation of glycerol to yield sn-glycerol 3-phosphate. The polypeptide is Glycerol kinase (Acaryochloris marina (strain MBIC 11017)).